Here is a 161-residue protein sequence, read N- to C-terminus: Probable ubiquitin-conjugating enzyme E2 17 (161 aa).

In terms of domain architecture, UBC core spans Ile15–Val161. Residue Cys99 is the Glycyl thioester intermediate of the active site.

Belongs to the ubiquitin-conjugating enzyme family.

The catalysed reaction is S-ubiquitinyl-[E1 ubiquitin-activating enzyme]-L-cysteine + [E2 ubiquitin-conjugating enzyme]-L-cysteine = [E1 ubiquitin-activating enzyme]-L-cysteine + S-ubiquitinyl-[E2 ubiquitin-conjugating enzyme]-L-cysteine.. The protein operates within protein modification; protein ubiquitination. Functionally, accepts the ubiquitin from the E1 complex and catalyzes its covalent attachment to other proteins. This chain is Probable ubiquitin-conjugating enzyme E2 17 (UBC17), found in Arabidopsis thaliana (Mouse-ear cress).